A 569-amino-acid chain; its full sequence is MAVSERRGLSGESPTQCRWGYLSLLVLTLSGCSGRIHRLTLTGEKRADIQLNSFGFYTNGSLEVELSLLRLSLQETEKKLPKVGFSLSRVRSGSVRSYSRRNSHECPLDRNSSNFLVLFLINIKDLQVQVRKYGEQKLFISPGLLPEAPTQSGPPKPDPAGTPKDNHVIHPSPTEMSAVKENQTAPQVSGDKTTPGEHRHSSERQPPTQDPSGKEKDQVLGLGHLNDSYNFSFHIVISSRAEEGQYSLNFHNCHNSIPGQEQPFDLTVMIREKNPEGFLSAAEIPLFKLYLIMSACFLAADIFWVSVLCKNTYSVFKIHWLMAALAFTKSVSLLFHSINYYFINSQGHPIEGLAVMHYITHLLKGALLFITIALIGSGWAFVKYMLSDKEKKIFGIVIPLQVLANVAYIVIESREEGASDYGLWKEILFLVDLICCGAILFPVVWSIRHLQDASGTDGKVAVNLARLKLFRHYYVMVICYIYFTRIIAILLQVAVPFQWQWLYQLLVESSTLAFFVLTGYKFQPAGDNPYLQLPQEDEEDVQMEQVMTDSGFREGLSKVNKTASGRELL.

Residues 1–34 form the signal peptide; it reads MAVSERRGLSGESPTQCRWGYLSLLVLTLSGCSG. N-linked (GlcNAc...) asparagine glycosylation is found at Asn59, Asn111, and Asn182. The disordered stretch occupies residues 144 to 219; the sequence is LLPEAPTQSG…DPSGKEKDQV (76 aa). Residues 180 to 192 show a composition bias toward polar residues; sequence KENQTAPQVSGDK. Basic and acidic residues predominate over residues 194–203; sequence TPGEHRHSSE. N-linked (GlcNAc...) asparagine glycosylation is found at Asn226 and Asn230. 7 helical membrane-spanning segments follow: residues 289 to 309, 318 to 338, 362 to 382, 393 to 413, 427 to 447, 475 to 495, and 499 to 519; these read LYLIMSACFLAADIFWVSVLC, IHWLMAALAFTKSVSLLFHSI, LLKGALLFITIALIGSGWAFV, IFGIVIPLQVLANVAYIVIES, ILFLVDLICCGAILFPVVWSI, VMVICYIYFTRIIAILLQVAV, and WQWLYQLLVESSTLAFFVLTG.

The protein belongs to the LU7TM family. As to expression, high expression in spleen, lung, stomach, large and small intestine, and thymus.

The protein localises to the golgi apparatus. It localises to the cis-Golgi network membrane. Its subcellular location is the trans-Golgi network membrane. It is found in the golgi apparatus membrane. Functionally, may play a role in intracellular immune modulation by activating NF-kappaB response and attenuating Toll-like-receptor response. (Microbial infection) Plays an essential function in adeno-associated virus (AAV) transduction, across multiple serotypes except AAV5. May play a critical role in mediating the endosomal virus escape or in the AAV virions trafficking from endosomes to the nucleus. The protein is Protein GPR108 (Gpr108) of Mus musculus (Mouse).